Reading from the N-terminus, the 130-residue chain is Small ribosomal subunit protein uS11 (130 aa).

It belongs to the universal ribosomal protein uS11 family. In terms of assembly, part of the 30S ribosomal subunit. Interacts with proteins S7 and S18. Binds to IF-3.

Functionally, located on the platform of the 30S subunit, it bridges several disparate RNA helices of the 16S rRNA. Forms part of the Shine-Dalgarno cleft in the 70S ribosome. This chain is Small ribosomal subunit protein uS11, found in Syntrophus aciditrophicus (strain SB).